Consider the following 1768-residue polypeptide: Maestro heat-like repeat-containing protein family member 1 homolog (1768 aa).

HEAT repeat units follow at residues 4 to 47 (TSQV…HQPN), 164 to 203 (VHNP…AICS), 816 to 856 (QRLQ…AVHP), 1166 to 1204 (QSQM…ARGA), 1483 to 1521 (EQLL…CSST), and 1731 to 1768 (TISR…HDFH).

The protein belongs to the MROH1 family. Homooligomer; homooligomerizes at lysosome scission sites.

It is found in the lysosome membrane. In terms of biological role, lysosome fission factor. Recruited to lysosomes by rab-7 at scission sites and homooligomerizes to mediate the constriction and scission of lysosomal tubules. May sever membranes by inserting amphipathic helices into one bilayer leaflet. Lysosome fission is required to maintain their steady-state number, shape, size, composition and function, and to accomplish regeneration. In Caenorhabditis elegans, this protein is Maestro heat-like repeat-containing protein family member 1 homolog.